Consider the following 412-residue polypeptide: Serine hydroxymethyltransferase (412 aa).

(6S)-5,6,7,8-tetrahydrofolate is bound by residues leucine 117 and 121–123 (GHL). Position 226 is an N6-(pyridoxal phosphate)lysine (lysine 226).

It belongs to the SHMT family. As to quaternary structure, homodimer. Pyridoxal 5'-phosphate is required as a cofactor.

Its subcellular location is the cytoplasm. The catalysed reaction is (6R)-5,10-methylene-5,6,7,8-tetrahydrofolate + glycine + H2O = (6S)-5,6,7,8-tetrahydrofolate + L-serine. The protein operates within one-carbon metabolism; tetrahydrofolate interconversion. It participates in amino-acid biosynthesis; glycine biosynthesis; glycine from L-serine: step 1/1. Its function is as follows. Catalyzes the reversible interconversion of serine and glycine with tetrahydrofolate (THF) serving as the one-carbon carrier. This reaction serves as the major source of one-carbon groups required for the biosynthesis of purines, thymidylate, methionine, and other important biomolecules. Also exhibits THF-independent aldolase activity toward beta-hydroxyamino acids, producing glycine and aldehydes, via a retro-aldol mechanism. The protein is Serine hydroxymethyltransferase of Staphylococcus saprophyticus subsp. saprophyticus (strain ATCC 15305 / DSM 20229 / NCIMB 8711 / NCTC 7292 / S-41).